Here is a 518-residue protein sequence, read N- to C-terminus: Protein nucleotidyltransferase YdiU (518 aa).

8 residues coordinate ATP: Gly-100, Gly-102, Arg-103, Lys-123, Asp-135, Gly-136, Arg-193, and Arg-200. Residue Asp-270 is the Proton acceptor of the active site. Mg(2+)-binding residues include Asn-271 and Asp-280. Position 280 (Asp-280) interacts with ATP.

It belongs to the SELO family. The cofactor is Mg(2+). Requires Mn(2+) as cofactor.

The enzyme catalyses L-seryl-[protein] + ATP = 3-O-(5'-adenylyl)-L-seryl-[protein] + diphosphate. It catalyses the reaction L-threonyl-[protein] + ATP = 3-O-(5'-adenylyl)-L-threonyl-[protein] + diphosphate. The catalysed reaction is L-tyrosyl-[protein] + ATP = O-(5'-adenylyl)-L-tyrosyl-[protein] + diphosphate. It carries out the reaction L-histidyl-[protein] + UTP = N(tele)-(5'-uridylyl)-L-histidyl-[protein] + diphosphate. The enzyme catalyses L-seryl-[protein] + UTP = O-(5'-uridylyl)-L-seryl-[protein] + diphosphate. It catalyses the reaction L-tyrosyl-[protein] + UTP = O-(5'-uridylyl)-L-tyrosyl-[protein] + diphosphate. Nucleotidyltransferase involved in the post-translational modification of proteins. It can catalyze the addition of adenosine monophosphate (AMP) or uridine monophosphate (UMP) to a protein, resulting in modifications known as AMPylation and UMPylation. The protein is Protein nucleotidyltransferase YdiU of Xanthomonas oryzae pv. oryzae (strain PXO99A).